Here is a 490-residue protein sequence, read N- to C-terminus: Serine hydroxymethyltransferase, mitochondrial (490 aa).

A mitochondrion-targeting transit peptide spans 1–20 (MFPRASALAKCMATVHRRGL). The residue at position 265 (K265) is an N6-(pyridoxal phosphate)lysine.

Belongs to the SHMT family. Homotetramer. Interacts with NAP1. The cofactor is pyridoxal 5'-phosphate.

It is found in the mitochondrion. It carries out the reaction (6R)-5,10-methylene-5,6,7,8-tetrahydrofolate + glycine + H2O = (6S)-5,6,7,8-tetrahydrofolate + L-serine. The protein operates within one-carbon metabolism; tetrahydrofolate interconversion. Functionally, interconversion of serine and glycine. The polypeptide is Serine hydroxymethyltransferase, mitochondrial (SHM1) (Saccharomyces cerevisiae (strain ATCC 204508 / S288c) (Baker's yeast)).